The chain runs to 271 residues: Shikimate dehydrogenase (NADP(+)) (271 aa).

Residues 14–16 (SLS) and Thr-61 each bind shikimate. Lys-65 acts as the Proton acceptor in catalysis. Positions 86 and 101 each coordinate shikimate. NADP(+) contacts are provided by residues 125-129 (GAGGA) and Ile-212. A shikimate-binding site is contributed by Tyr-214. Position 235 (Gly-235) interacts with NADP(+).

It belongs to the shikimate dehydrogenase family. Homodimer.

The enzyme catalyses shikimate + NADP(+) = 3-dehydroshikimate + NADPH + H(+). Its pathway is metabolic intermediate biosynthesis; chorismate biosynthesis; chorismate from D-erythrose 4-phosphate and phosphoenolpyruvate: step 4/7. Its function is as follows. Involved in the biosynthesis of the chorismate, which leads to the biosynthesis of aromatic amino acids. Catalyzes the reversible NADPH linked reduction of 3-dehydroshikimate (DHSA) to yield shikimate (SA). This chain is Shikimate dehydrogenase (NADP(+)), found in Clostridium perfringens (strain SM101 / Type A).